Consider the following 297-residue polypeptide: MARSDEDSWDLASSVGATATMVAAARAVASRGPEALIDDPYADALVRAVGVEYFVKLLDGEITLEADNAAMLAVMTDVMAVRTRFFDDFFLSSGLPQAVILASGLDARAYRLPWPSGSVVYEIDQPEVIEFKTRTLADLGASPAAELRTVAIDLRDDWPRALRDRGFDPTAPTAWIAEGLLIYLPPDAQDRLFDNITALSAPGSRLATEFHPDAGARIGASSQRMAEEWRRHGLDLDMADLFYDGERNPVVDYLRERGWEVEARSRPDMFAHYGRPFPTGEAVEALRQSLAVTATRR.

Residues D124 and 153–154 (DL) contribute to the S-adenosyl-L-methionine site.

This sequence belongs to the UPF0677 family.

Its function is as follows. Exhibits S-adenosyl-L-methionine-dependent methyltransferase activity. In Mycobacterium sp. (strain JLS), this protein is Putative S-adenosyl-L-methionine-dependent methyltransferase Mjls_1072.